Consider the following 428-residue polypeptide: Phosphomethylpyrimidine synthase (428 aa).

Substrate is bound by residues N66, M95, Y124, H163, 185 to 187 (SRG), 226 to 229 (DGLR), and E265. Residue H269 coordinates Zn(2+). Y292 contributes to the substrate binding site. H333 provides a ligand contact to Zn(2+). [4Fe-4S] cluster-binding residues include C407, C410, and C414.

Belongs to the ThiC family. [4Fe-4S] cluster is required as a cofactor.

The enzyme catalyses 5-amino-1-(5-phospho-beta-D-ribosyl)imidazole + S-adenosyl-L-methionine = 4-amino-2-methyl-5-(phosphooxymethyl)pyrimidine + CO + 5'-deoxyadenosine + formate + L-methionine + 3 H(+). It participates in cofactor biosynthesis; thiamine diphosphate biosynthesis. Catalyzes the synthesis of the hydroxymethylpyrimidine phosphate (HMP-P) moiety of thiamine from aminoimidazole ribotide (AIR) in a radical S-adenosyl-L-methionine (SAM)-dependent reaction. The chain is Phosphomethylpyrimidine synthase from Thermococcus kodakarensis (strain ATCC BAA-918 / JCM 12380 / KOD1) (Pyrococcus kodakaraensis (strain KOD1)).